We begin with the raw amino-acid sequence, 287 residues long: Ribosomal RNA small subunit methyltransferase A (287 aa).

Residues N18, L20, G45, E66, D91, and N118 each coordinate S-adenosyl-L-methionine.

The protein belongs to the class I-like SAM-binding methyltransferase superfamily. rRNA adenine N(6)-methyltransferase family. RsmA subfamily.

The protein resides in the cytoplasm. The catalysed reaction is adenosine(1518)/adenosine(1519) in 16S rRNA + 4 S-adenosyl-L-methionine = N(6)-dimethyladenosine(1518)/N(6)-dimethyladenosine(1519) in 16S rRNA + 4 S-adenosyl-L-homocysteine + 4 H(+). Its function is as follows. Specifically dimethylates two adjacent adenosines (A1518 and A1519) in the loop of a conserved hairpin near the 3'-end of 16S rRNA in the 30S particle. May play a critical role in biogenesis of 30S subunits. This chain is Ribosomal RNA small subunit methyltransferase A, found in Haemophilus influenzae (strain ATCC 51907 / DSM 11121 / KW20 / Rd).